We begin with the raw amino-acid sequence, 535 residues long: CTP synthase (535 aa).

The segment at 1 to 268 (MPNKYIVVTG…VSKILSRLKL (268 aa)) is amidoligase domain. Position 14 (serine 14) interacts with CTP. Serine 14 is a binding site for UTP. 15-20 (SVGKGT) contributes to the ATP binding site. Position 55 (tyrosine 55) interacts with L-glutamine. Aspartate 72 contacts ATP. 2 residues coordinate Mg(2+): aspartate 72 and glutamate 142. Residues 149–151 (DIE), 189–194 (KTKPLQ), and lysine 225 each bind CTP. Residues 189-194 (KTKPLQ) and lysine 225 each bind UTP. Valine 243 is an ATP binding site. Residues 302 to 535 (YTKLKDSYIS…LGFIRAVASL (234 aa)) enclose the Glutamine amidotransferase type-1 domain. Glycine 359 contributes to the L-glutamine binding site. The Nucleophile; for glutamine hydrolysis role is filled by cysteine 386. L-glutamine is bound by residues 387 to 390 (FGFQ), glutamate 410, and arginine 467. Catalysis depends on residues histidine 511 and glutamate 513.

Belongs to the CTP synthase family. As to quaternary structure, homotetramer in the presence of ATP and UTP. The enzyme dissociates into homodimers in the absence of substrate nucleotides.

It catalyses the reaction UTP + L-glutamine + ATP + H2O = CTP + L-glutamate + ADP + phosphate + 2 H(+). It carries out the reaction L-glutamine + H2O = L-glutamate + NH4(+). The catalysed reaction is UTP + NH4(+) + ATP = CTP + ADP + phosphate + 2 H(+). It functions in the pathway pyrimidine metabolism; CTP biosynthesis via de novo pathway; CTP from UDP: step 2/2. Allosterically activated by GTP, when glutamine is the substrate; GTP has no effect on the reaction when ammonia is the substrate. The allosteric effector GTP functions by stabilizing the protein conformation that binds the tetrahedral intermediate(s) formed during glutamine hydrolysis. Inhibited by the product CTP, via allosteric rather than competitive inhibition. Its function is as follows. Catalyzes the ATP-dependent amination of UTP to CTP with either L-glutamine or ammonia as the source of nitrogen. Regulates intracellular CTP levels through interactions with the four ribonucleotide triphosphates. The chain is CTP synthase from Saccharolobus solfataricus (strain ATCC 35092 / DSM 1617 / JCM 11322 / P2) (Sulfolobus solfataricus).